Consider the following 1203-residue polypeptide: Kinesin-like protein KIN-14Q (1203 aa).

Positions 1-28 are disordered; that stretch reads MEDCCDPLLATDASPRPESFSRSEKDIA. Over residues 19 to 28 the composition is skewed to basic and acidic residues; it reads SFSRSEKDIA. A coiled-coil region spans residues 336-395; it reads ENLVCRAEEEAEGMRSDCEQQRKEMEDMKRMVEELKLENQQKTRECEEALNSLSEIQNEL. One can recognise a Kinesin motor domain in the interval 499–825; it reads NIRVFCRCRP…LNFASRVRGI (327 aa). ATP is bound at residue 582 to 589; that stretch reads GQTGTGKT. Positions 846-901 form a coiled coil; sequence VEKWKQDMKGKDEQIRKMEETMYGLEAKIKERDTKNKTLQDKVKELESQLLVERKL. The tract at residues 907-931 is disordered; the sequence is DTKIAEQQTKQQTEDENNTSKRPPL.

Belongs to the TRAFAC class myosin-kinesin ATPase superfamily. Kinesin family. KIN-14 subfamily.

The chain is Kinesin-like protein KIN-14Q from Arabidopsis thaliana (Mouse-ear cress).